The chain runs to 232 residues: Glycerol-3-phosphate acyltransferase 4 (232 aa).

Helical transmembrane passes span 4–24 (VFLI…AYLL), 54–76 (LGLA…AGWL), 80–99 (LWQQ…WPVF), 107–127 (GIAT…LIAL), 143–163 (VFLG…FFGV), and 168–188 (TVTW…LMAP).

It belongs to the PlsY family. Probably interacts with PlsX.

It is found in the cell membrane. It catalyses the reaction an acyl phosphate + sn-glycerol 3-phosphate = a 1-acyl-sn-glycero-3-phosphate + phosphate. It functions in the pathway lipid metabolism; phospholipid metabolism. Catalyzes the transfer of an acyl group from acyl-phosphate (acyl-PO(4)) to glycerol-3-phosphate (G3P) to form lysophosphatidic acid (LPA). This enzyme utilizes acyl-phosphate as fatty acyl donor, but not acyl-CoA or acyl-ACP. This chain is Glycerol-3-phosphate acyltransferase 4, found in Dehalococcoides mccartyi (strain CBDB1).